The primary structure comprises 98 residues: NADH-ubiquinone oxidoreductase chain 4L (98 aa).

The next 3 helical transmembrane spans lie at Met-1–Val-21, Ser-29–Leu-49, and Ile-58–Leu-78.

The protein belongs to the complex I subunit 4L family. As to quaternary structure, core subunit of respiratory chain NADH dehydrogenase (Complex I) which is composed of 45 different subunits.

Its subcellular location is the mitochondrion inner membrane. The catalysed reaction is a ubiquinone + NADH + 5 H(+)(in) = a ubiquinol + NAD(+) + 4 H(+)(out). In terms of biological role, core subunit of the mitochondrial membrane respiratory chain NADH dehydrogenase (Complex I) which catalyzes electron transfer from NADH through the respiratory chain, using ubiquinone as an electron acceptor. Part of the enzyme membrane arm which is embedded in the lipid bilayer and involved in proton translocation. The polypeptide is NADH-ubiquinone oxidoreductase chain 4L (MT-ND4L) (Pan paniscus (Pygmy chimpanzee)).